Consider the following 497-residue polypeptide: Glutamyl-tRNA(Gln) amidotransferase subunit A (497 aa).

Active-site charge relay system residues include K75 and S150. The active-site Acyl-ester intermediate is S174.

Belongs to the amidase family. GatA subfamily. In terms of assembly, heterotrimer of A, B and C subunits.

The enzyme catalyses L-glutamyl-tRNA(Gln) + L-glutamine + ATP + H2O = L-glutaminyl-tRNA(Gln) + L-glutamate + ADP + phosphate + H(+). Functionally, allows the formation of correctly charged Gln-tRNA(Gln) through the transamidation of misacylated Glu-tRNA(Gln) in organisms which lack glutaminyl-tRNA synthetase. The reaction takes place in the presence of glutamine and ATP through an activated gamma-phospho-Glu-tRNA(Gln). The polypeptide is Glutamyl-tRNA(Gln) amidotransferase subunit A (Paraburkholderia phymatum (strain DSM 17167 / CIP 108236 / LMG 21445 / STM815) (Burkholderia phymatum)).